The chain runs to 435 residues: BAHD acyltransferase BIA1 (435 aa).

Residues H151 and D369 each act as proton acceptor in the active site.

It belongs to the plant acyltransferase family. Mostly expressed in roots (particularly in the root elongation zone), and, to a lower extent, in seedling, leaves (especially in hydathodes), siliques (e.g. in developing seeds) and flowers.

The protein localises to the cytoplasm. In terms of biological role, monitors brassinosteroids (BR) responses and homeostasis, particularly in the root and hypocotyl in darkness. Promotes flavonoid biosynthesis. The sequence is that of BAHD acyltransferase BIA1 from Arabidopsis thaliana (Mouse-ear cress).